Consider the following 63-residue polypeptide: MPQKFEQMQSAEQKHDEDETIAQAGTQIDDTVDALDAVLDDIESVLESNAEEYVGSFVQKGGE.

Polar residues predominate over residues 1 to 11; that stretch reads MPQKFEQMQSA. The segment at 1–28 is disordered; sequence MPQKFEQMQSAEQKHDEDETIAQAGTQI. Residues 19–57 form an ARC ATPase binding region; it reads ETIAQAGTQIDDTVDALDAVLDDIESVLESNAEEYVGSF. Glutamate 63 is covalently cross-linked (Isoglutamyl lysine isopeptide (Glu-Lys) (interchain with K-? in acceptor proteins)).

Belongs to the prokaryotic ubiquitin-like protein family. Strongly interacts with the proteasome-associated ATPase ARC through a hydrophobic interface; the interacting region of Pup lies in its C-terminal half. There is one Pup binding site per ARC hexamer ring.

It functions in the pathway protein degradation; proteasomal Pup-dependent pathway. In terms of biological role, protein modifier that is covalently attached to lysine residues of substrate proteins, thereby targeting them for proteasomal degradation. The tagging system is termed pupylation. The protein is Prokaryotic ubiquitin-like protein Pup (pup) of Bifidobacterium adolescentis (strain ATCC 15703 / DSM 20083 / NCTC 11814 / E194a).